The primary structure comprises 188 residues: Adenine phosphoribosyltransferase (188 aa).

Belongs to the purine/pyrimidine phosphoribosyltransferase family. In terms of assembly, homodimer.

It localises to the cytoplasm. The catalysed reaction is AMP + diphosphate = 5-phospho-alpha-D-ribose 1-diphosphate + adenine. The protein operates within purine metabolism; AMP biosynthesis via salvage pathway; AMP from adenine: step 1/1. Functionally, catalyzes a salvage reaction resulting in the formation of AMP, that is energically less costly than de novo synthesis. This chain is Adenine phosphoribosyltransferase, found in Burkholderia vietnamiensis (strain G4 / LMG 22486) (Burkholderia cepacia (strain R1808)).